A 429-amino-acid chain; its full sequence is Argininosuccinate lyase (429 aa).

The protein belongs to the lyase 1 family. Argininosuccinate lyase subfamily.

The protein resides in the cytoplasm. It catalyses the reaction 2-(N(omega)-L-arginino)succinate = fumarate + L-arginine. It functions in the pathway amino-acid biosynthesis; L-arginine biosynthesis; L-arginine from L-ornithine and carbamoyl phosphate: step 3/3. This chain is Argininosuccinate lyase, found in Pyrobaculum aerophilum (strain ATCC 51768 / DSM 7523 / JCM 9630 / CIP 104966 / NBRC 100827 / IM2).